A 787-amino-acid polypeptide reads, in one-letter code: MERVQRVLEYNKMKQQLLEHVASSLGRQKVNELVPSTSLEEVRHLQDETAEAANVLRLKGHVPLGGISDVRPHIKRAAIGGVLSATELIEIASTLYGGKRVKQFIETIIEDGHIEVPILAGHVEQIEPLSPIEKAIKQCIDDNGYVLDSASTSLRTVRHQIRSYESGIKSKLDQLTRSSNTRKMLSDAIVTIRSDRYVLPVKQEYRGTFGGIVHDQSSSGATLFIEPAAIVTLNNQLTEAKAKEKREIERILRELSAKVAEESEQLLLNVDKLAQLDFICAKAYYAKAVKAVKPTLNDRGYLDLRQARHPLLPPDKVVPSDMAIGDQVRSLVITGPNTGGKTVTLKTIGLLTLMAQSGLFVPAAEETELAVFEHIFADIGDEQSIEQSLSTFSSHMKNIVSILNEMNENSLILFDELGAGTDPTEGAALAISILDHVYKRGALAVATTHYSELKGYAYNREGALNASVEFDVETLRPTYRLLVGVPGRSNAFAISRRLGLDERIIDQAKLQIDSDASQVEKMIASLEDSQKSAQSEWSRAEAVRREAEALKRDLEKRMASFEEMKEAALQKAEQKAEKVVAAAQENAELIISELRDLQKQGVAVKEHQLIEARKQLEEAAPKLVSKKRKQVKKQAEKAKRLPEPGDEVKVLSFNQKGTVVKKIGDNEYQVQLGIMKMAVPIDDIQLLEQERRQPEKAITTIRGNDAHVKAELDLRGERYEDAMRRVEKYIDDALLAGYHQVSIIHGKGTGALRKGVKQFVANHPRVKSARDGGMNEGGLGNTVIELK.

335-342 (GPNTGGKT) lines the ATP pocket. The Smr domain maps to 712–787 (LDLRGERYED…GLGNTVIELK (76 aa)).

It belongs to the DNA mismatch repair MutS family. MutS2 subfamily. Homodimer. Binds to stalled ribosomes, contacting rRNA.

In terms of biological role, endonuclease that is involved in the suppression of homologous recombination and thus may have a key role in the control of bacterial genetic diversity. Its function is as follows. Acts as a ribosome collision sensor, splitting the ribosome into its 2 subunits. Detects stalled/collided 70S ribosomes which it binds and splits by an ATP-hydrolysis driven conformational change. Acts upstream of the ribosome quality control system (RQC), a ribosome-associated complex that mediates the extraction of incompletely synthesized nascent chains from stalled ribosomes and their subsequent degradation. Probably generates substrates for RQC. This is Endonuclease MutS2 from Shouchella clausii (strain KSM-K16) (Alkalihalobacillus clausii).